A 213-amino-acid chain; its full sequence is Serine acetyltransferase (213 aa).

It belongs to the transferase hexapeptide repeat family.

The protein localises to the cytoplasm. The catalysed reaction is L-serine + acetyl-CoA = O-acetyl-L-serine + CoA. Its pathway is amino-acid biosynthesis; L-cysteine biosynthesis; L-cysteine from L-serine: step 1/2. This Staphylococcus epidermidis (strain ATCC 35984 / DSM 28319 / BCRC 17069 / CCUG 31568 / BM 3577 / RP62A) protein is Serine acetyltransferase (cysE).